The sequence spans 979 residues: MRRPRRPGGSGGSGGSGGLRLLVCLLLLSGRPGGCSAISAHGCLFDRRLCSHLEVCIQDGLFGQCQAGVGQARPLLQVTSPVLQRLQGVLRQLMSQGLSWHDDLTQHVISQEMERIPRLRPPEPHPRDRSGLVPRKPGPAGELLTQGNPTGSSPAAQGFPRPAGGRSWGGSPLSSLQAELLPPLLEHLLMPPQPPHPALTYEPALLQPYLFHQFGSRDGSRGSESSSGVVGVGHLSKAEGPALFSRSASKAILGTHSGHSFGDLTGPSPAQLFQDSGLLYMAQELPVPGRARAPRLPENGGNRAEDSSEGHEEEVLGGRGEKSPPQAAQPELSLQRLTAVLAGYGVELRQLTPEQFSTLLTLLQLLPKGTGRNLEGAVNVGGADVKKTIQQMQRGDPAEALPPTPSLPGYLTASPASSEVQQVLSPGFPEPPHTPSPLGSSSVLLEKKSPLGQSQPTVVGRPSARPSAEEYGYIVTDQKPLSLVAGVRLLEILAEHVHMSSGSFINISVVGPAVTFRIRHNEQNLSLADVTQQAGLVKSELEAQTGLQILQTGVGQREEAAEVLPRQAHGISPMRSVLLTLVALAGVAGLLVALAVALCMRHHSRQRDKERLAALGPEGAHGDTTFEYQDLCRQHMATKSLFNRAEGQPEPSRVSSVSSQFSDAAQASPSSHSSTPSWCEEPAQANMDISTGHMILAYMEDHLRNRDRLAKEWQALCAYQAEPNTCAAAQDESNIKKNRHPDFLPYDHARIKLKVESSPSRSDYINASPIIEHDPRMPAYIATQGPLSHTIADFWQMVWESGCTVIVMLTPLVEDGVKQCDRYWPDEGSSLYHVYEVNLVSEHIWCEDFLVRSFYLKNLQTQETRTLTQFHFLSWPAEGTPASTRPLLDFRRKVNKCYRGRSCPIIVHCSDGAGRTGTYILIDMVLNRMAKGVKEIDIAATLEHVRDQRPGLVRSKDQFEFALTAVAEEVNAILKALPQ.

The first 37 residues, 1-37, serve as a signal peptide directing secretion; the sequence is MRRPRRPGGSGGSGGSGGLRLLVCLLLLSGRPGGCSA. The interval 38 to 134 is RESP18 homology domain; it reads ISAHGCLFDR…HPRDRSGLVP (97 aa). The Lumenal portion of the chain corresponds to 38-575; the sequence is ISAHGCLFDR…RQAHGISPMR (538 aa). A disulfide bridge links Cys56 with Cys65. Residues 113 to 130 are compositionally biased toward basic and acidic residues; the sequence is MERIPRLRPPEPHPRDRS. Disordered stretches follow at residues 113–173, 289–330, and 392–443; these read MERI…GSPL, GRAR…AAQP, and MQRG…SSSV. A compositionally biased stretch (polar residues) spans 145–155; it reads TQGNPTGSSPA. Residues 303–322 are compositionally biased toward basic and acidic residues; the sequence is RAEDSSEGHEEEVLGGRGEK. A phosphoserine mark is found at Ser307 and Ser308. Polar residues predominate over residues 414–424; that stretch reads SPASSEVQQVL. The interval 449-575 is sufficient for dimerization of proICA512; that stretch reads SPLGQSQPTV…RQAHGISPMR (127 aa). 2 N-linked (GlcNAc...) asparagine glycosylation sites follow: Asn506 and Asn524. Residues 576–600 traverse the membrane as a helical segment; the sequence is SVLLTLVALAGVAGLLVALAVALCM. The tract at residues 601–732 is sufficient for dimerization of proICA512; the sequence is RHHSRQRDKE…PNTCAAAQDE (132 aa). At 601–979 the chain is on the cytoplasmic side; that stretch reads RHHSRQRDKE…VNAILKALPQ (379 aa). The interval 644 to 680 is disordered; it reads RAEGQPEPSRVSSVSSQFSDAAQASPSSHSSTPSWCE. The segment covering 648–677 has biased composition (low complexity); that stretch reads QPEPSRVSSVSSQFSDAAQASPSSHSSTPS. The Tyrosine-protein phosphatase domain maps to 709-969; sequence LAKEWQALCA…EFALTAVAEE (261 aa). A Glycyl lysine isopeptide (Lys-Gly) (interchain with G-Cter in SUMO) cross-link involves residue Lys754.

The protein belongs to the protein-tyrosine phosphatase family. Receptor class 8 subfamily. In terms of assembly, homodimer; shown for the unprocessed protein (proICA512) in the endoplasmic reticulum and resolved during protein maturation as ICA512-TMF seems to be predominantly monomeric in secretory granules; however, ICA512-CCF interacts with ICA512-TMF disrupting the ICA512-TMF:SNTB2 complex. The isolated lumenal RESP18 homology domain has been shown to form disulfide-linked homooligomers. Interacts (via cytoplasmic domain) with phosphorylated SNTB2; this protects PTPRN against cleavage by CAPN1 to produce ICA512-CCF. Dephosphorylation of SNTB2 upon insulin stimulation disrupts the interaction and results in PTPRN cleavage. Interacts with SNX19. ICA512-CCF interacts with PIAS4; in the nucleus. Interacts with STAT5B (phosphorylated); down-regulated by ICA512-CCF sumoylation; ICA512-CCF prevents STAT5B dephosphorylation; ICA512-CCF mediates interaction of STAT5B with PIAS4. Interacts (via RESP18 homology domain) with insulin and proinsulin. Interacts with PTPRN2, PTPRA and PTPRE. Subject to proteolytic cleavage at multiple sites. Subject to cleavage on a pair of basic residues. On exocytosis of secretory granules in pancreatic beta-cells ICA512-TMF is transiently inserted in the plasma-membrane and cleaved by mu-type calpain CPN1 to yield ICA512-CCF. Post-translationally, O-glycosylated. In terms of processing, N-glycosylated. Sumoylated at two sites including Lys-754. Sumoylation decreases interaction with STAT5. As to expression, detected in pituitary. Detected in brain (at protein level). Detected in brain. Weakly expressed in the colon, intestine, stomach and pancreas.

It localises to the membrane. It is found in the cytoplasmic vesicle. Its subcellular location is the secretory vesicle membrane. The protein localises to the perikaryon. The protein resides in the cell projection. It localises to the axon. It is found in the synapse. Its subcellular location is the cell membrane. The protein localises to the endosome. The protein resides in the nucleus. In terms of biological role, plays a role in vesicle-mediated secretory processes. Required for normal accumulation of secretory vesicles in hippocampus, pituitary and pancreatic islets. Required for the accumulation of normal levels of insulin-containing vesicles and preventing their degradation. Plays a role in insulin secretion in response to glucose stimuli. Required for normal accumulation of the neurotransmitters norepinephrine, dopamine and serotonin in the brain. In females, but not in males, required for normal accumulation and secretion of pituitary hormones, such as luteinizing hormone (LH) and follicle-stimulating hormone (FSH). Seems to lack intrinsic enzyme activity. Required to maintain normal levels of renin expression and renin release. May regulate catalytic active protein-tyrosine phosphatases such as PTPRA through dimerization. ICA512-TMF regulates dynamics and exocytosis of insulin secretory granules (SGs); binding of ICA512-TMF to SNTB2/beta-2-syntrophin is proposed to restrain SGs mobility and exocytosis by tethering them to the actin cytoskeleton depending on UTRN; the function is inhibited by cytoplasmic ICA512-CFF dimerizing with ICA512-TMF and displacing SNTB2. Functionally, ICA512-CCF translocated to the nucleus promotes expression of insulin and other granule-related genes; the function implicates binding to and regulating activity of STAT5B probably by preventing its dephosphorylation and potentially by inducing its sumoylation by recruiting PIAS4. Enhances pancreatic beta-cell proliferation by converging with signaling by STAT5B and STAT3. ICA512-CCF located in the cytoplasm regulates dynamics and exocytosis of insulin secretory granules (SGs) by dimerizing with ICA512-TMF and displacing SNTB2 thus enhancing SGs mobility and exocytosis. The protein is Receptor-type tyrosine-protein phosphatase-like N (Ptprn) of Mus musculus (Mouse).